A 342-amino-acid polypeptide reads, in one-letter code: Aristolochene synthase prx2 (342 aa).

Mg(2+) is bound by residues aspartate 115, asparagine 244, serine 248, and glutamate 252. Residues arginine 340 and tyrosine 341 each contribute to the (2E,6E)-farnesyl diphosphate site.

This sequence belongs to the terpene synthase family. Homodimer. The cofactor is Mg(2+).

The catalysed reaction is (2E,6E)-farnesyl diphosphate = (+)-aristolochene + diphosphate. The protein operates within sesquiterpene biosynthesis; aristolochene biosynthesis; aristolochene from farnesyl diphosphate: step 1/1. Aristolochene synthase; part of the gene cluster that mediates the biosynthesis of PR-toxin, a bicyclic sesquiterpene belonging to the eremophilane class and acting as a mycotoxin. The first step of the pathway is catalyzed by the aristolochene synthase which performs the cyclization of trans,trans-farnesyl diphosphate (FPP) to the bicyclic sesquiterpene aristolochene. Following the formation of aristolochene, the non-oxygenated aristolochene is converted to the trioxygenated intermediate eremofortin B, via 7-epi-neopetasone. This conversion appears to involve three enzymes, a hydroxysterol oxidase-like enzyme, the quinone-oxidase prx3 that forms the quinone-type-structure in the bicyclic nucleus of aristolochene with the C8-oxo group and the C-3 hydroxyl group, and the P450 monooxygenase prx9 that introduces the epoxide at the double bond between carbons 1 and 2. No monoxy or dioxy-intermediates have been reported to be released to the broth, so these three early oxidative reactions may be coupled together. Eremofortin B is further oxidized by another P450 monooxygenase, that introduces a second epoxide between carbons 7 and 11 prior to acetylation to eremofortin A by the acetyltransferase prx11. The second epoxidation may be performed by a second P450 monooxygenase. After the acetylation step, the conversion of eremofortin A to eremofortin C and then to PR-toxin requires only two enzymes. First the conversion of eremofortin A to eremofortin C proceeds by oxidation of the side chain of the molecule at C-12 and is catalyzed by the short-chain oxidoreductase prx1. The cytochrome P450 monooxygenase prx8 also plays a role in this step. The primary alcohol formed at C-12 is finally oxidized by the short-chain alcohol dehydrogenase prx4 that forms PR-toxin. The chain is Aristolochene synthase prx2 from Penicillium rubens (strain ATCC 28089 / DSM 1075 / NRRL 1951 / Wisconsin 54-1255) (Penicillium chrysogenum).